The following is a 124-amino-acid chain: Large ribosomal subunit protein bL12 (124 aa).

Belongs to the bacterial ribosomal protein bL12 family. In terms of assembly, homodimer. Part of the ribosomal stalk of the 50S ribosomal subunit. Forms a multimeric L10(L12)X complex, where L10 forms an elongated spine to which 2 to 4 L12 dimers bind in a sequential fashion. Binds GTP-bound translation factors.

Forms part of the ribosomal stalk which helps the ribosome interact with GTP-bound translation factors. Is thus essential for accurate translation. In Paracoccus denitrificans (strain Pd 1222), this protein is Large ribosomal subunit protein bL12.